The chain runs to 179 residues: Large ribosomal subunit protein uL5 (179 aa).

This sequence belongs to the universal ribosomal protein uL5 family. In terms of assembly, part of the 50S ribosomal subunit; part of the 5S rRNA/L5/L18/L25 subcomplex. Contacts the 5S rRNA and the P site tRNA. Forms a bridge to the 30S subunit in the 70S ribosome.

Its function is as follows. This is one of the proteins that bind and probably mediate the attachment of the 5S RNA into the large ribosomal subunit, where it forms part of the central protuberance. In the 70S ribosome it contacts protein S13 of the 30S subunit (bridge B1b), connecting the 2 subunits; this bridge is implicated in subunit movement. Contacts the P site tRNA; the 5S rRNA and some of its associated proteins might help stabilize positioning of ribosome-bound tRNAs. This chain is Large ribosomal subunit protein uL5, found in Staphylococcus carnosus (strain TM300).